Here is a 172-residue protein sequence, read N- to C-terminus: 18.6 kDa class III heat shock protein (172 aa).

The interval 29–54 is disordered; sequence RRSAGDHAHHAAHGHGQHRISGIGGG. The 125-residue stretch at 48–172 folds into the sHSP domain; the sequence is ISGIGGGAPV…KTKSVQVTIA (125 aa).

The protein belongs to the small heat shock protein (HSP20) family. In terms of assembly, may form oligomeric structures.

It is found in the cytoplasm. The protein is 18.6 kDa class III heat shock protein (HSP18.6) of Oryza sativa subsp. japonica (Rice).